The following is a 368-amino-acid chain: uncharacterized protein (368 aa).

Belongs to the ornithine cyclodeaminase/mu-crystallin family.

This is an uncharacterized protein from Dictyostelium discoideum (Social amoeba).